Here is a 520-residue protein sequence, read N- to C-terminus: MLHKSPSRKRFASPLHLGCILTLTVLCLIAYYFALPDYLSVGKSSSRGAMDQKSDGTFRLKSIYRHGVGANHRLHQRLEVTPEVISAAGMLYQETTTQGQDFEDQEPLWTTNAEYATTNPFDFEFELRRMPLLMKRMKERDPEFIESYIYGETYMTEEEEHAMWIDDDIVAPNITDRGTVVSLALMSSNAYVRIPQTGDWRNVTEPWNETEPEDFGWDGDGIRGHVFYNEVENIVVLSIKGTSAQGLPGSGEDETTGNDKINDNLLFSCCCARVSYLWTTVCDCYVKSYTCDESCLEKELRRKDRFYSAVVDIYKGVLKEYPDAAIWVTGHSLGGALASLLGRTFGLPAVAFESPGELLPSKRLHLPFPPGLPSYMEGIWHFGHNADPIFMGTCNGASSSCSLVGYAMETACHTGRVCVYDVVNDKGWSVNMFNHRIHKVIDEVLLGYEQAAKCVEPEPCVDCYNWKFIPSRDWESSSRLITKTKSHAAPTTTTRTTATTTSSSTCVGRNWLGFCTKYEL.

The Cytoplasmic segment spans residues 1–14 (MLHKSPSRKRFASP). The chain crosses the membrane as a helical; Signal-anchor for type II membrane protein span at residues 15–35 (LHLGCILTLTVLCLIAYYFAL). The Lumenal segment spans residues 36 to 520 (PDYLSVGKSS…WLGFCTKYEL (485 aa)). N-linked (GlcNAc...) asparagine glycosylation is found at Asn173, Asn202, and Asn208. Ser332 (charge relay system) is an active-site residue.

The protein belongs to the AB hydrolase superfamily. Lipase family. In terms of assembly, binds to both phosphatidylinositol (PI) and phosphatidylinositol 3,5-bisphosphate (PIP2).

It is found in the endosome. Its subcellular location is the multivesicular body membrane. The protein resides in the prevacuolar compartment membrane. The enzyme catalyses a triacylglycerol + H2O = a diacylglycerol + a fatty acid + H(+). In terms of biological role, lipase which is essential for lysis of subvacuolar cytoplasm to vacuole targeted bodies and intravacuolar autophagic bodies. Involved in the lysis of intravacuolar multivesicular body (MVB) vesicles. The intravacuolar membrane disintegration by ATG15 is critical to life span extension. This is Putative lipase ATG15 (ATG15) from Saccharomyces cerevisiae (strain YJM789) (Baker's yeast).